A 363-amino-acid polypeptide reads, in one-letter code: Cyclin-D1-1 (363 aa).

A disordered region spans residues E39–G77. Positions S50 to A65 are enriched in low complexity. The span at A66–E75 shows a compositional bias: acidic residues.

The protein belongs to the cyclin family. Cyclin D subfamily.

This is Cyclin-D1-1 (CYCD1-1) from Oryza sativa subsp. japonica (Rice).